Consider the following 622-residue polypeptide: Calmodulin-binding protein 60 C (622 aa).

Positions 1-19 are enriched in basic and acidic residues; it reads MQTRYMERTNSMREKRKLE. Residues 1-35 are disordered; the sequence is MQTRYMERTNSMREKRKLEEDDNQQQQQQPERKRP. A calmodulin-binding region spans residues 10 to 89; the sequence is NSMREKRKLE…RLSERSSPKR (80 aa). The DNA-binding stretch occupies residues 159 to 282; that stretch reads EDDDGWSGEE…AFHKKLNKAG (124 aa).

This sequence belongs to the plant ACBP60 protein family. In terms of assembly, interacts with calmodulin (CaM). In terms of tissue distribution, expressed in stems, flowers and root.

The protein localises to the nucleus. Functionally, transcription activator that binds DNA in a sequence-specific manner, likely 5'-GAAATTTTGG-3', to promote the expression of target genes. The polypeptide is Calmodulin-binding protein 60 C (Arabidopsis thaliana (Mouse-ear cress)).